A 496-amino-acid polypeptide reads, in one-letter code: Probable malate:quinone oxidoreductase (496 aa).

Belongs to the MQO family. It depends on FAD as a cofactor.

It catalyses the reaction (S)-malate + a quinone = a quinol + oxaloacetate. The protein operates within carbohydrate metabolism; tricarboxylic acid cycle; oxaloacetate from (S)-malate (quinone route): step 1/1. This chain is Probable malate:quinone oxidoreductase, found in Prochlorococcus marinus (strain NATL1A).